The chain runs to 216 residues: Large ribosomal subunit protein uL3 (216 aa).

An N5-methylglutamine modification is found at Gln-153.

It belongs to the universal ribosomal protein uL3 family. In terms of assembly, part of the 50S ribosomal subunit. Forms a cluster with proteins L14 and L19. In terms of processing, methylated by PrmB.

In terms of biological role, one of the primary rRNA binding proteins, it binds directly near the 3'-end of the 23S rRNA, where it nucleates assembly of the 50S subunit. This is Large ribosomal subunit protein uL3 from Burkholderia multivorans (strain ATCC 17616 / 249).